Here is a 106-residue protein sequence, read N- to C-terminus: uncharacterized protein (106 aa).

This sequence belongs to the csb family.

This is an uncharacterized protein from Dictyostelium discoideum (Social amoeba).